Here is a 284-residue protein sequence, read N- to C-terminus: NAD kinase (284 aa).

The Proton acceptor role is filled by D60. Residues 60–61 (DG), 134–135 (ND), R145, K162, D164, 175–180 (TAYSFS), and Q234 each bind NAD(+).

Belongs to the NAD kinase family. It depends on a divalent metal cation as a cofactor.

It localises to the cytoplasm. The catalysed reaction is NAD(+) + ATP = ADP + NADP(+) + H(+). In terms of biological role, involved in the regulation of the intracellular balance of NAD and NADP, and is a key enzyme in the biosynthesis of NADP. Catalyzes specifically the phosphorylation on 2'-hydroxyl of the adenosine moiety of NAD to yield NADP. This chain is NAD kinase, found in Clostridium beijerinckii (strain ATCC 51743 / NCIMB 8052) (Clostridium acetobutylicum).